The primary structure comprises 1151 residues: Chromosome partition protein Smc (1151 aa).

An ATP-binding site is contributed by 32–39 (PNGCGKSN). 4 coiled-coil regions span residues 170–218 (ISGL…AARY), 342–379 (IGRL…ALGE), 407–508 (DSRT…REAQ), and 633–994 (LKQL…EGRE). Composition is skewed to basic and acidic residues over residues 421–438 (RARE…RAAE) and 465–480 (DEAR…EARA). Disordered regions lie at residues 421 to 483 (RARE…AQRS), 806 to 826 (SAEL…AAEA), and 862 to 889 (LRAA…AEAR). A compositionally biased stretch (basic and acidic residues) spans 866 to 889 (QEAEREAERQAGESREARARAEAR).

This sequence belongs to the SMC family. As to quaternary structure, homodimer.

It is found in the cytoplasm. Its function is as follows. Required for chromosome condensation and partitioning. This is Chromosome partition protein Smc from Cereibacter sphaeroides (strain ATCC 17029 / ATH 2.4.9) (Rhodobacter sphaeroides).